A 502-amino-acid chain; its full sequence is Lysine--tRNA ligase (502 aa).

Mg(2+) contacts are provided by Glu413 and Glu420.

This sequence belongs to the class-II aminoacyl-tRNA synthetase family. As to quaternary structure, homodimer. Requires Mg(2+) as cofactor.

The protein resides in the cytoplasm. It carries out the reaction tRNA(Lys) + L-lysine + ATP = L-lysyl-tRNA(Lys) + AMP + diphosphate. This chain is Lysine--tRNA ligase, found in Haemophilus influenzae (strain PittEE).